The chain runs to 501 residues: Beta-secretase 1 (501 aa).

A signal peptide spans 1 to 21 (MAQALPWLLLWMGSGVLPAHG). Positions 22–45 (SQPGIRLPLRSGLGGAPLGLRLPR) are excised as a propeptide. Residues 22–457 (SQPGIRLPLR…PQTDESTLMT (436 aa)) are Extracellular-facing. The tract at residues 39–58 (LGLRLPRETDEESEEPGRRG) is disordered. A Peptidase A1 domain is found at 75-416 (YYVEMTLGSP…DRARKRIGFA (342 aa)). Asp93 is a catalytic residue. An N6-acetyllysine modification is found at Lys126. N-linked (GlcNAc...) asparagine glycans are attached at residues Asn153, Asn172, and Asn223. 3 disulfides stabilise this stretch: Cys216–Cys420, Cys278–Cys443, and Cys330–Cys380. Residues Lys275, Lys279, and Lys285 each carry the N6-acetyllysine modification. The active site involves Asp289. An N6-acetyllysine mark is found at Lys299, Lys300, and Lys307. Residue Asn354 is glycosylated (N-linked (GlcNAc...) asparagine). Residues 458-478 (IAYVMAAICALFMLPLCLMVC) traverse the membrane as a helical segment. Residues Cys474, Cys478, Cys482, and Cys485 are each lipidated (S-palmitoyl cysteine). The Cytoplasmic segment spans residues 479 to 501 (QWRCLRCLRHQHDDFADDISLLK). Positions 479-501 (QWRCLRCLRHQHDDFADDISLLK) are interaction with RTN3. The short motif at 496-500 (DISLL) is the DXXLL element. At Ser498 the chain carries Phosphoserine. Residue Lys501 forms a Glycyl lysine isopeptide (Lys-Gly) (interchain with G-Cter in ubiquitin) linkage.

It belongs to the peptidase A1 family. As to quaternary structure, monomer. Interacts (via DXXLL motif) with GGA1, GGA2 and GGA3 (via their VHS domain); the interaction highly increases when BACE1 is phosphorylated at Ser-498. Interacts with RTN1; RTN2; RTN3 and RTN4; the interaction leads to inhibition of amyloid precursor protein processing. Interacts with SNX6. Interacts with PCSK9. Interacts with NAT8 and NAT8B. Interacts with BIN1. Interacts (via extracellular domain) with ADAM10 (via extracellular domain). Interacts with SORL1; this interaction may affect binding with APP and hence reduce APP cleavage. Interacts with NRDC AND NRG1. Palmitoylation mediates lipid raft localization. Post-translationally, acetylated in the endoplasmic reticulum at Lys-126, Lys-275, Lys-279, Lys-285, Lys-299, Lys-300 and Lys-307. Acetylation by NAT8 and NAT8B is transient and deacetylation probably occurs in the Golgi. Acetylation regulates the maturation, the transport to the plasma membrane, the stability and the expression of the protein. In terms of processing, ubiquitinated at Lys-501, ubiquitination leads to lysosomal degradation. Monoubiquitinated and 'Lys-63'-linked polyubitinated. Deubiquitnated by USP8; inhibits lysosomal degradation. Phosphorylation at Ser-498 is required for interaction with GGA1 and retrograded transport from endosomal compartments to the trans-Golgi network. Non-phosphorylated BACE1 enters a direct recycling route to the cell surface. Post-translationally, N-Glycosylated. Addition of a bisecting N-acetylglucosamine by MGAT3 blocks lysosomal targeting, further degradation and is required for maintaining stability under stress conditions.

The protein resides in the cell membrane. The protein localises to the golgi apparatus. It localises to the trans-Golgi network. It is found in the endoplasmic reticulum. Its subcellular location is the endosome. The protein resides in the cell surface. The protein localises to the cytoplasmic vesicle membrane. It localises to the membrane raft. It is found in the lysosome. Its subcellular location is the late endosome. The protein resides in the early endosome. The protein localises to the recycling endosome. It localises to the cell projection. It is found in the axon. Its subcellular location is the dendrite. The enzyme catalyses Broad endopeptidase specificity. Cleaves Glu-Val-Asn-Leu-|-Asp-Ala-Glu-Phe in the Swedish variant of Alzheimer's amyloid precursor protein.. Inhibited by RTN3 and RTN4. In terms of biological role, responsible for the proteolytic processing of the amyloid precursor protein (APP). Cleaves at the N-terminus of the A-beta peptide sequence, between residues 671 and 672 of APP, leads to the generation and extracellular release of beta-cleaved soluble APP, and a corresponding cell-associated C-terminal fragment which is later released by gamma-secretase. Cleaves CHL1. The polypeptide is Beta-secretase 1 (BACE1) (Bos taurus (Bovine)).